Consider the following 355-residue polypeptide: Peptide chain release factor 1 (355 aa).

Glutamine 233 carries the post-translational modification N5-methylglutamine.

Belongs to the prokaryotic/mitochondrial release factor family. Post-translationally, methylated by PrmC. Methylation increases the termination efficiency of RF1.

The protein resides in the cytoplasm. Peptide chain release factor 1 directs the termination of translation in response to the peptide chain termination codons UAG and UAA. This chain is Peptide chain release factor 1, found in Desulforudis audaxviator (strain MP104C).